Consider the following 38-residue polypeptide: Photosystem II reaction center protein M (38 aa).

The chain crosses the membrane as a helical span at residues 7–27 (GFVASILFVLVPSVFLIILYI).

Belongs to the PsbM family. As to quaternary structure, PSII is composed of 1 copy each of membrane proteins PsbA, PsbB, PsbC, PsbD, PsbE, PsbF, PsbH, PsbI, PsbJ, PsbK, PsbL, PsbM, PsbT, PsbX, PsbY, PsbZ, Psb30/Ycf12, peripheral proteins PsbO, CyanoQ (PsbQ), PsbU, PsbV and a large number of cofactors. It forms dimeric complexes.

It is found in the cellular thylakoid membrane. One of the components of the core complex of photosystem II (PSII). PSII is a light-driven water:plastoquinone oxidoreductase that uses light energy to abstract electrons from H(2)O, generating O(2) and a proton gradient subsequently used for ATP formation. It consists of a core antenna complex that captures photons, and an electron transfer chain that converts photonic excitation into a charge separation. This subunit is found at the monomer-monomer interface. This is Photosystem II reaction center protein M from Nostoc sp. (strain PCC 7120 / SAG 25.82 / UTEX 2576).